Reading from the N-terminus, the 129-residue chain is Large ribosomal subunit protein bL12 (129 aa).

This sequence belongs to the bacterial ribosomal protein bL12 family. In terms of assembly, homodimer. Part of the ribosomal stalk of the 50S ribosomal subunit. Forms a multimeric L10(L12)X complex, where L10 forms an elongated spine to which 2 to 4 L12 dimers bind in a sequential fashion. Binds GTP-bound translation factors.

Its function is as follows. Forms part of the ribosomal stalk which helps the ribosome interact with GTP-bound translation factors. Is thus essential for accurate translation. The sequence is that of Large ribosomal subunit protein bL12 from Mycobacteroides abscessus (strain ATCC 19977 / DSM 44196 / CCUG 20993 / CIP 104536 / JCM 13569 / NCTC 13031 / TMC 1543 / L948) (Mycobacterium abscessus).